A 734-amino-acid chain; its full sequence is MALLILLFLLPSPLHSQHTCSISKVTSLLEVNCENKKLTALPADLPADTGILHLGENQLGTFSTASLVHFTHLTYLYLDRCELTSLQTNGKLIKLENLDLSHNNLKSLPSLGWALPALTTLDVSFNKLGSLSPGVLDGLSQLQELYLQNNDLKSLPPGLLLPTTKLKKLNLANNKLRELPSGLLDGLEDLDTLYLQRNWLRTIPKGFFGTLLLPFVFLHANSWYCDCEILYFRHWLQENANNVYLWKQGVDVKDTTPNVASVRCANLDNAPVYSYPGKGCPTSSGDTDYDDYDDIPDVPATRTEVKFSTNTKVHTTHWSLLAAAPSTSQDSQMISLPPTHKPTKKQSTFIHTQSPGFTTLPETMESNPTFYSLKLNTVLIPSPTTLEPTSTQATPEPNIQPMLTTSTLTTPEHSTTPVPTTTILTTPEHSTIPVPTTAILTTPKPSTIPVPTTATLTTLEPSTTPVPTTATLTTPEPSTTLVPTTATLTTPEHSTTPVPTTATLTTPEHSTTPVPTTATLTTPEPSTTLTNLVSTISPVLTTTLTTPESTPIETILEQFFTTELTLLPTLESTTTIIPEQNSFLNLPEVALVSSDTSESSPFLNSDFCCFLPLGFYVLGLLWLLFASVVLILLLTWTWHVTPHSLDMEQSAALATSTHTTSLEVQRARQVTMPRAWLLFLQGSLPTFRSSLFLWVRPNGRVGPLVAGRRPSALSQGRGQDLLGTVGIRYSGHSL.

The N-terminal stretch at 1 to 16 (MALLILLFLLPSPLHS) is a signal peptide. Positions 17 to 47 (QHTCSISKVTSLLEVNCENKKLTALPADLPA) constitute an LRRNT domain. Residues 17 to 612 (QHTCSISKVT…LNSDFCCFLP (596 aa)) lie on the Extracellular side of the membrane. Cysteine 20 and cysteine 33 are joined by a disulfide. LRR repeat units follow at residues 48–69 (DTGI…SLVH), 72–93 (HLTY…GKLI), 94–115 (KLEN…GWAL), 117–140 (ALTT…DGLS), 141–162 (QLQE…LLLP), 165–188 (KLKK…DGLE), and 189–210 (DLDT…FFGT). One can recognise an LRRCT domain in the interval 221-282 (NSWYCDCEIL…YSYPGKGCPT (62 aa)). 2 disulfide bridges follow: cysteine 225–cysteine 264 and cysteine 227–cysteine 280. Tyrosine 292 bears the Sulfotyrosine mark. O-linked (GalNAc...) threonine glycans are attached at residues threonine 301, threonine 311, threonine 315, and threonine 316. O-linked (GalNAc...) serine glycosylation occurs at serine 335. O-linked (GalNAc...) threonine glycosylation is found at threonine 339, threonine 348, threonine 358, and threonine 377. Serine 382 carries an O-linked (GalNAc...) serine glycan. Residues threonine 384, threonine 385, and threonine 405 are each glycosylated (O-linked (GalNAc...) threonine). Disordered regions lie at residues 406 to 429 (STLT…TPEH) and 460 to 526 (EPST…PEPS). 8 O-linked (GalNAc...) threonine glycosylation sites follow: threonine 512, threonine 516, threonine 519, threonine 530, threonine 542, threonine 546, threonine 550, and threonine 562. The O-linked (GalNAc...) serine glycan is linked to serine 572. Threonine 573 carries O-linked (GalNAc...) threonine glycosylation. Residues 613 to 633 (LGFYVLGLLWLLFASVVLILL) traverse the membrane as a helical segment. Over 634–734 (LTWTWHVTPH…VGIRYSGHSL (101 aa)) the chain is Cytoplasmic. A phosphoserine mark is found at serine 711 and serine 714.

In terms of assembly, two GP-Ib beta are disulfide-linked to one GP-Ib alpha. GP-IX is complexed with the GP-Ib heterodimer via a non covalent linkage. Interacts with FLNB. Interacts with FLNA (via filamin repeats 4, 9, 12, 17, 19, 21, and 23). O-glycosylated. In terms of processing, glycocalicin is the product of a proteolytic cleavage/shedding, catalyzed by ADAM17, which releases most of the extracellular domain. Binding sites for vWF and thrombin are in this part of the protein.

The protein resides in the membrane. Its function is as follows. GP-Ib, a surface membrane protein of platelets, participates in the formation of platelet plugs by binding to the A1 domain of vWF, which is already bound to the subendothelium. In Mus musculus (Mouse), this protein is Platelet glycoprotein Ib alpha chain (Gp1ba).